Here is a 57-residue protein sequence, read N- to C-terminus: Plasma membrane proteolipid 3 (57 aa).

The helical transmembrane segment at 34–54 (INILLTILGYLPGIVHALYII) threads the bilayer.

It belongs to the UPF0057 (PMP3) family.

Its subcellular location is the cell membrane. Its function is as follows. Plays a role in the regulation of membrane potential. Could mediate a proton leak. This is Plasma membrane proteolipid 3 (pmp-1) from Neurospora crassa (strain ATCC 24698 / 74-OR23-1A / CBS 708.71 / DSM 1257 / FGSC 987).